The sequence spans 146 residues: Large ribosomal subunit protein uL15 (146 aa).

Basic and acidic residues predominate over residues 1–13; that stretch reads MKLNELKPNEGSR. The tract at residues 1–54 is disordered; sequence MKLNELKPNEGSRRNRKRVGRGTSSGYGKTAGRGQKGQLARTGGKTRLGFEGGQ. The span at 23–35 shows a compositional bias: gly residues; sequence TSSGYGKTAGRGQ.

The protein belongs to the universal ribosomal protein uL15 family. As to quaternary structure, part of the 50S ribosomal subunit.

Binds to the 23S rRNA. The polypeptide is Large ribosomal subunit protein uL15 (Lactobacillus gasseri (strain ATCC 33323 / DSM 20243 / BCRC 14619 / CIP 102991 / JCM 1131 / KCTC 3163 / NCIMB 11718 / NCTC 13722 / AM63)).